Reading from the N-terminus, the 533-residue chain is Early growth response protein 1 (533 aa).

2 disordered regions span residues 1 to 94 (MAAA…EQPY) and 161 to 237 (MTNP…PPPA). Over residues 68–77 (SGGGGGGGSN) the composition is skewed to gly residues. Positions 164 to 189 (PPTSSSSAPSPAASSSSSASQSPPLS) are enriched in low complexity. Lysine 303 participates in a covalent cross-link: Glycyl lysine isopeptide (Lys-Gly) (interchain with G-Cter in SUMO2). Positions 316–336 (PSRMRKYPNRPSKTPPHERPY) are disordered. C2H2-type zinc fingers lie at residues 336–360 (YACP…IRIH), 366–388 (FQCR…IRTH), and 394–416 (FACD…TKIH). A disordered region spans residues 407–478 (DERKRHTKIH…SSTYPSPAHS (72 aa)). Over residues 411–421 (RHTKIHLRQKD) the composition is skewed to basic residues. Positions 427-475 (SVVASPAASSLSSYPSPVATSYPSPATTSFPSPVPTSYSSPGSSTYPSP) are enriched in low complexity.

Belongs to the EGR C2H2-type zinc-finger protein family. In terms of assembly, interacts with SNAI1 and SP1 upon 12-O-tetradecanoylphorbol-13-acetate (TPA) induction. In terms of tissue distribution, detected in lung vasculature and in mononuclear phagocytes. Detected in liver (at protein level). Expressed in the liver in a circadian manner.

It localises to the nucleus. The protein resides in the cytoplasm. In terms of biological role, transcriptional regulator. Recognizes and binds to the DNA sequence 5'-GCG(T/G)GGGCG-3'(EGR-site) in the promoter region of target genes. Binds double-stranded target DNA, irrespective of the cytosine methylation status. Regulates the transcription of numerous target genes, and thereby plays an important role in regulating the response to growth factors, DNA damage, and ischemia. Plays a role in the regulation of cell survival, proliferation and cell death. Activates expression of p53/TP53 and TGFB1, and thereby helps prevent tumor formation. Required for normal progress through mitosis and normal proliferation of hepatocytes after partial hepatectomy. Mediates responses to ischemia and hypoxia; regulates the expression of proteins such as IL1B and CXCL2 that are involved in inflammatory processes and development of tissue damage after ischemia. Regulates biosynthesis of luteinizing hormone (LHB) in the pituitary. Regulates the amplitude of the expression rhythms of clock genes: BMAL1, PER2 and NR1D1 in the liver via the activation of PER1 (clock repressor) transcription. Regulates the rhythmic expression of core-clock gene BMAL1 in the suprachiasmatic nucleus (SCN). This Mus musculus (Mouse) protein is Early growth response protein 1 (Egr1).